Here is a 196-residue protein sequence, read N- to C-terminus: uncharacterized protein (196 aa).

A helical transmembrane segment spans residues 20–40 (GALALGCIALLLMGIVGCTTV).

It localises to the membrane. This is an uncharacterized protein from Mycobacterium tuberculosis (strain CDC 1551 / Oshkosh).